A 345-amino-acid chain; its full sequence is Viral Fc-gamma receptor-like protein UL119 (345 aa).

A signal peptide spans 1–23; sequence MCSVLAIALVVALLGDMHPGVKS. The disordered stretch occupies residues 23 to 42; that stretch reads SSTTSAVTSPSNTTVTSTTS. At 24 to 294 the chain is on the virion surface side; that stretch reads STTSAVTSPS…KSDPLFEDRL (271 aa). 12 N-linked (GlcNAc...) asparagine; by host glycosylation sites follow: asparagine 34, asparagine 48, asparagine 95, asparagine 104, asparagine 148, asparagine 179, asparagine 198, asparagine 217, asparagine 225, asparagine 241, asparagine 244, and asparagine 260. An Ig-like V-type domain is found at 91–190; sequence QVSLNATCKV…TWDLFTYPIY (100 aa). The chain crosses the membrane as a helical span at residues 295-317; the sequence is LAYGVLAFLVFMVIILLYVTYML. Residues 318–345 are Intravirion-facing; it reads ARRRDWSYKRLEEPVEEKKHPVPYFKQW.

It is found in the virion membrane. Functionally, serves as a receptor for the Fc part of human IgG. May thus be involved in interfering with host Ig-mediated immune responses. The polypeptide is Viral Fc-gamma receptor-like protein UL119 (UL119/UL118) (Human cytomegalovirus (strain AD169) (HHV-5)).